A 162-amino-acid chain; its full sequence is Putative colanic acid biosynthesis acetyltransferase WcaB (162 aa).

This sequence belongs to the transferase hexapeptide repeat family.

The protein operates within slime biogenesis; slime polysaccharide biosynthesis. This Escherichia coli O157:H7 protein is Putative colanic acid biosynthesis acetyltransferase WcaB (wcaB).